The sequence spans 137 residues: UBAP1-MVB12-associated (UMA)-domain containing protein 1 (137 aa).

The tract at residues 1 to 72 (MFHFFRKPPE…VSDPEMENKA (72 aa)) is disordered. The span at 32 to 44 (DEQRMTARGKTSD) shows a compositional bias: basic and acidic residues. The segment covering 50–63 (PLETNKENSSSVTV) has biased composition (polar residues). The UMA domain occupies 86–134 (LSDVPFTLAPHVLAVQGTITDLPDHLLSYDGSENLSRFWYDFTLENSVL).

This chain is UBAP1-MVB12-associated (UMA)-domain containing protein 1, found in Homo sapiens (Human).